The following is a 128-amino-acid chain: Aspartate 1-decarboxylase (128 aa).

The Schiff-base intermediate with substrate; via pyruvic acid role is filled by Ser25. At Ser25 the chain carries Pyruvic acid (Ser). Position 57 (Thr57) interacts with substrate. The active-site Proton donor is Tyr58. Residue 73 to 75 (GAA) coordinates substrate.

It belongs to the PanD family. Heterooctamer of four alpha and four beta subunits. The cofactor is pyruvate. In terms of processing, is synthesized initially as an inactive proenzyme, which is activated by self-cleavage at a specific serine bond to produce a beta-subunit with a hydroxyl group at its C-terminus and an alpha-subunit with a pyruvoyl group at its N-terminus.

It localises to the cytoplasm. It catalyses the reaction L-aspartate + H(+) = beta-alanine + CO2. Its pathway is cofactor biosynthesis; (R)-pantothenate biosynthesis; beta-alanine from L-aspartate: step 1/1. Catalyzes the pyruvoyl-dependent decarboxylation of aspartate to produce beta-alanine. This chain is Aspartate 1-decarboxylase, found in Ruminiclostridium cellulolyticum (strain ATCC 35319 / DSM 5812 / JCM 6584 / H10) (Clostridium cellulolyticum).